The primary structure comprises 522 residues: Vicilin-like seed storage protein At4g36700 (522 aa).

The first 25 residues, 1–25 (MTRFAVLPLSVLLLVLLFLCTESLA), serve as a signal peptide directing secretion. 5 N-linked (GlcNAc...) asparagine glycosylation sites follow: Asn-206, Asn-303, Asn-341, Asn-374, and Asn-414. The Cupin type-1 domain occupies 265-421 (FNVFESEPDF…SLNVSSVTID (157 aa)). The segment at 457–522 (DERKRRHDER…EWEMEGEEES (66 aa)) is disordered. 2 stretches are compositionally biased toward basic and acidic residues: residues 466–491 (RKKE…EKKR) and 501–515 (EELR…KEWE).

The protein belongs to the 7S seed storage protein family.

Its function is as follows. Seed storage protein. The polypeptide is Vicilin-like seed storage protein At4g36700 (Arabidopsis thaliana (Mouse-ear cress)).